The sequence spans 707 residues: DNA-binding protein RFX2 (707 aa).

Serine 33 carries the phosphoserine modification. Residues 204–279 (HLQWLLDNYE…YHYYGIRLKP (76 aa)) constitute a DNA-binding region (RFX-type winged-helix). Residues 297–337 (QQPVHQKPRYRPAQKTDSLGESGSHSSLHSTPEQAMAAQSQ) are disordered. Residues 315-337 (LGESGSHSSLHSTPEQAMAAQSQ) are compositionally biased toward low complexity. Residue serine 420 is modified to Phosphoserine.

Belongs to the RFX family. Homodimer; probably only forms homodimers in testis. Heterodimer; heterodimerizes with RFX1 and RFX3.

The protein localises to the nucleus. The protein resides in the cytoplasm. In terms of biological role, transcription factor that acts as a key regulator of spermatogenesis. Acts by regulating expression of genes required for the haploid phase during spermiogenesis, such as genes required for cilium assembly and function. Recognizes and binds the X-box, a regulatory motif with DNA sequence 5'-GTNRCC(0-3N)RGYAAC-3' present on promoters. Probably activates transcription of the testis-specific histone gene H1-6. This chain is DNA-binding protein RFX2 (RFX2), found in Bos taurus (Bovine).